Reading from the N-terminus, the 345-residue chain is Putative F-box protein At3g17265 (345 aa).

One can recognise an F-box domain in the interval 1–46 (MMFAYLPPDLESEILSRVPATFLKELQTTCKRWYALFRDPIFVKKN).

The polypeptide is Putative F-box protein At3g17265 (Arabidopsis thaliana (Mouse-ear cress)).